The chain runs to 84 residues: Anaphase-promoting complex subunit 11 (84 aa).

Zn(2+)-binding residues include Cys-23, Cys-26, Cys-34, Cys-37, Cys-44, Cys-51, His-53, His-56, His-58, Cys-59, Cys-73, and Cys-76. The RING-type zinc-finger motif lies at 34-77 (CPDCKVPGDDCPLVWGQCSHCFHMHCILKWLNAQQVQQHCPMCR).

This sequence belongs to the RING-box family. As to quaternary structure, the mammalian APC/C is composed at least of 14 distinct subunits ANAPC1, ANAPC2, CDC27/APC3, ANAPC4, ANAPC5, CDC16/APC6, ANAPC7, CDC23/APC8, ANAPC10, ANAPC11, CDC26/APC12, ANAPC13, ANAPC15 and ANAPC16 that assemble into a complex of at least 19 chains with a combined molecular mass of around 1.2 MDa; APC/C interacts with FZR1 and FBXO5. Interacts with the cullin domain of ANAPC2. Interacts with UBE2D2. Post-translationally, auto-ubiquitinated.

It is found in the cytoplasm. The protein resides in the nucleus. The protein operates within protein modification; protein ubiquitination. Functionally, together with the cullin protein ANAPC2, constitutes the catalytic component of the anaphase promoting complex/cyclosome (APC/C), a cell cycle-regulated E3 ubiquitin ligase that controls progression through mitosis and the G1 phase of the cell cycle. The APC/C complex acts by mediating ubiquitination and subsequent degradation of target proteins: it mainly mediates the formation of 'Lys-11'-linked polyubiquitin chains and, to a lower extent, the formation of 'Lys-48'- and 'Lys-63'-linked polyubiquitin chains. The APC/C complex catalyzes assembly of branched 'Lys-11'-/'Lys-48'-linked branched ubiquitin chains on target proteins. May recruit the E2 ubiquitin-conjugating enzymes to the complex. This chain is Anaphase-promoting complex subunit 11 (Anapc11), found in Mus musculus (Mouse).